The sequence spans 618 residues: 1-deoxy-D-xylulose-5-phosphate synthase (618 aa).

Thiamine diphosphate-binding positions include His-72 and 113–115 (GHA). Asp-144 contacts Mg(2+). Thiamine diphosphate is bound by residues 145-146 (GA), Asn-173, His-284, and Glu-359. Asn-173 serves as a coordination point for Mg(2+).

Belongs to the transketolase family. DXPS subfamily. In terms of assembly, homodimer. Requires Mg(2+) as cofactor. The cofactor is thiamine diphosphate.

The catalysed reaction is D-glyceraldehyde 3-phosphate + pyruvate + H(+) = 1-deoxy-D-xylulose 5-phosphate + CO2. Its pathway is metabolic intermediate biosynthesis; 1-deoxy-D-xylulose 5-phosphate biosynthesis; 1-deoxy-D-xylulose 5-phosphate from D-glyceraldehyde 3-phosphate and pyruvate: step 1/1. Functionally, catalyzes the acyloin condensation reaction between C atoms 2 and 3 of pyruvate and glyceraldehyde 3-phosphate to yield 1-deoxy-D-xylulose-5-phosphate (DXP). The sequence is that of 1-deoxy-D-xylulose-5-phosphate synthase from Dictyoglomus thermophilum (strain ATCC 35947 / DSM 3960 / H-6-12).